The primary structure comprises 743 residues: Cytosolic neutral trehalase (743 aa).

Ca(2+)-binding residues include D95, D97, N99, Q101, and D106. Substrate contacts are provided by residues R285, 292–293 (WD), N329, 338–340 (RSQ), E405, R454, and G457. Active-site proton donor/acceptor residues include D459 and E664.

It belongs to the glycosyl hydrolase 37 family. Ca(2+) is required as a cofactor.

It localises to the cytoplasm. It catalyses the reaction alpha,alpha-trehalose + H2O = alpha-D-glucose + beta-D-glucose. It functions in the pathway carbohydrate degradation. In terms of biological role, hydrolyzes intracellular trehalose to glucose. This Beauveria bassiana (strain ARSEF 2860) (White muscardine disease fungus) protein is Cytosolic neutral trehalase.